A 289-amino-acid polypeptide reads, in one-letter code: Protein SET (289 aa).

The segment at 1 to 42 is disordered; sequence MAPKRQSAILPQPKKPRPVAAPKLEDKSASPGLPKGEKEQQE. Ala2 carries the n,N,N-trimethylalanine modification. The residue at position 7 (Ser7) is a Phosphoserine. Position 11 is an N6-acetyllysine (Pro11). A Phosphoserine modification is found at Lys15. Residue Lys23 is modified to N6-acetyllysine. A phosphoserine mark is found at Leu24, Ser28, and Ser62. The dimerization stretch occupies residues 31–77; it reads PGLPKGEKEQQEAIEHIDEVQNEIDRLNEQASEEILKVEQKYNKLRQ. At Lys67 the chain carries N6-acetyllysine. An earmuff domain region spans residues 78 to 224; the sequence is PFFQKRSELI…ELGEVIKDDI (147 aa). Phosphotyrosine is present on Tyr145. Lys149 bears the N6-acetyllysine mark. A Glycyl lysine isopeptide (Lys-Gly) (interchain with G-Cter in ubiquitin) cross-link involves residue Lys153. 2 disordered regions span residues 157–206 and 235–289; these read LNES…TWFT and PDMD…GEDD. The span at 168–180 shows a compositional bias: basic and acidic residues; the sequence is TEIKWKSGKDLTK. Position 171 is an N6-acetyllysine (Lys171). Acidic residues predominate over residues 236 to 289; that stretch reads DMDDEEGEAEDDDDDDEEEEGLEDIDEEGDEDEGEEDDDEDEGEEGEEDEGEDD.

The protein belongs to the nucleosome assembly protein (NAP) family. Headphone-shaped homodimer. Isoform 1 and isoform 2 interact directly with each other and with ANP32A within the tripartite INHAT (inhibitor of acetyltransferases) complex. Isoform 1 and isoform 2 interact also with histones. Isoform 2 is a omponent of the SET complex, composed of at least ANP32A, APEX1, HMGB2, NME1, SET and TREX1, but not NME2 or TREX2. Within this complex, directly interacts with ANP32A, NME1, HMGB2 and TREX1; the interaction with ANP32A is enhanced after cleavage. Interacts with APBB1, CHTOP, SETBP1, SGO1. Isoform 2 is phosphorylated on Ser-15 and Ser-24. Post-translationally, isoform 2 is acetylated on Lys-11. In terms of processing, some glutamate residues are glycylated by TTLL8. This modification occurs exclusively on glutamate residues and results in a glycine chain on the gamma-carboxyl group. N-terminus of isoform 1 is methylated by METTL11A/NTM1. Mainly trimethylated. Post-translationally, cleaved after Lys-176 by GZMA. The cleavage inhibits its nucleosome assembly activity and disrupts the inhibition on NME1. Widely expressed, with higher expression in brain, thymus, spleen and bone marrow, and lower expression in heart, liver and muscle.

The protein localises to the cytoplasm. Its subcellular location is the cytosol. The protein resides in the endoplasmic reticulum. It localises to the nucleus. It is found in the nucleoplasm. Functionally, multitasking protein, involved in apoptosis, transcription, nucleosome assembly and histone chaperoning. Isoform 2 anti-apoptotic activity is mediated by inhibition of the GZMA-activated DNase, NME1. In the course of cytotoxic T-lymphocyte (CTL)-induced apoptosis, GZMA cleaves SET, disrupting its binding to NME1 and releasing NME1 inhibition. Isoform 1 and isoform 2 are potent inhibitors of protein phosphatase 2A. Isoform 1 and isoform 2 inhibit EP300/CREBBP and PCAF-mediated acetylation of histones (HAT) and nucleosomes, most probably by masking the accessibility of lysines of histones to the acetylases. The predominant target for inhibition is histone H4. HAT inhibition leads to silencing of HAT-dependent transcription and prevents active demethylation of DNA. Both isoforms stimulate DNA replication of the adenovirus genome complexed with viral core proteins; however, isoform 2 specific activity is higher. The sequence is that of Protein SET (Set) from Rattus norvegicus (Rat).